A 465-amino-acid chain; its full sequence is MPNSSIRSELTTERGFSGPASNFNIGHGGLNQLGGAFVNGRPLPEVVRQRIVDLAHQGVRPCDISRQLRVSHGCVSKILGRYYETGSIRPGVIGGSKPKVATPKVVEKIGDYKRQNPTMFAWEIRDRLLTDGVCDNDTVPSVSSINRIIRTKVQQLFNLPMESCVKSLSPGQTLIPSSTVTPPESPHSDSLGSTYSISGLLGITQPSADGKRKLDDSDQESCRLSIDSQGSVGISRKQLRTEAYGHHPLDALECHFQRQHFPESYSSSTHSKTEQALYTLPLLNISLDDGKSSLTSTNTTIGRNLSTHQGYSALSEFTAFSIKQEASDSSSASSTPSSLCSPTFLDLQPINSGCSAPSFSAFSHPSVYGQFTSHVASGRDVVGATLPGYPPHIPSGQGNYASSAIAGMVAAGGDYSANAYSHGAYAAYGDSWRFPSSSLLGSPYYYSSGTRTAPPPTTAGAYDLM.

Positions 26 to 152 (GHGGLNQLGG…SSINRIIRTK (127 aa)) form a DNA-binding region, paired. The segment at 29 to 85 (GLNQLGGAFVNGRPLPEVVRQRIVDLAHQGVRPCDISRQLRVSHGCVSKILGRYYET) is PAI subdomain. The RED subdomain stretch occupies residues 104-152 (KVVEKIGDYKRQNPTMFAWEIRDRLLTDGVCDNDTVPSVSSINRIIRTK). Residues 206-227 (PSADGKRKLDDSDQESCRLSID) form a disordered region.

In terms of tissue distribution, expression starts at late gastrula stages in cells fated to become the primordia of the otic system and the pronephric kidney. Expression is maintained in these two structures through late tailbud stages. Does not appear to be expressed in the thyroid gland.

It localises to the nucleus. Functionally, probable transcription factor. Involved in kidney development, acting synergistically with lhx1/lim-1 to establish the pronephric primordium in late gastrulae/early neurulae. In Xenopus laevis (African clawed frog), this protein is Paired box protein Pax-8.